The chain runs to 329 residues: DNA-directed RNA polymerase subunit alpha (329 aa).

The segment at 1–235 (MQGSVTEFLK…EQLEAFVDLR (235 aa)) is alpha N-terminal domain (alpha-NTD). The alpha C-terminal domain (alpha-CTD) stretch occupies residues 249–329 (FDPILLRPVD…NWPPASIADE (81 aa)).

The protein belongs to the RNA polymerase alpha chain family. In terms of assembly, homodimer. The RNAP catalytic core consists of 2 alpha, 1 beta, 1 beta' and 1 omega subunit. When a sigma factor is associated with the core the holoenzyme is formed, which can initiate transcription.

The enzyme catalyses RNA(n) + a ribonucleoside 5'-triphosphate = RNA(n+1) + diphosphate. DNA-dependent RNA polymerase catalyzes the transcription of DNA into RNA using the four ribonucleoside triphosphates as substrates. The polypeptide is DNA-directed RNA polymerase subunit alpha (Cronobacter sakazakii (strain ATCC BAA-894) (Enterobacter sakazakii)).